A 419-amino-acid chain; its full sequence is Octopressin receptor (419 aa).

Residues 1 to 37 (MENFTEENLHPWITTTTRVYNNVTIFPQYDDELGKFE) are Extracellular-facing. Asparagine 3 and asparagine 22 each carry an N-linked (GlcNAc...) asparagine glycan. A helical transmembrane segment spans residues 38–58 (IMVLCILCFMALFGNAVVLIV). Over 59 to 80 (LRIKKTTLTRMQLLIVYLSVTD) the chain is Cytoplasmic. A helical transmembrane segment spans residues 81–101 (ISVALFHILPTIILKINVYFL). Topologically, residues 102-108 (GDISACR) are extracellular. Cysteine 107 and cysteine 182 are oxidised to a cystine. The helical transmembrane segment at 109-129 (VYQFITVAELYASSFVLIVTA) threads the bilayer. The Cytoplasmic portion of the chain corresponds to 130–153 (LDRYISICHPLAAHMWTNRRVHMT). Residues 154-174 (TALALFLALMCSLPQLDAVLV) form a helical membrane-spanning segment. The Extracellular segment spans residues 175 to 192 (DFHGGKLCRPNLTTELAN). Asparagine 185 carries an N-linked (GlcNAc...) asparagine glycan. Residues 193-213 (IAYSWWAFCSVFFVPLLLLIF) traverse the membrane as a helical segment. Residues 214–292 (FYGRICFVVW…VSKSKIKTIK (79 aa)) lie on the Cytoplasmic side of the membrane. The interval 253-274 (SQTSSENRVKNYSDARDKDSSR) is disordered. The segment covering 259 to 274 (NRVKNYSDARDKDSSR) has biased composition (basic and acidic residues). Residues 293-313 (LTFSVVACFIICYTPFFTVLM) form a helical membrane-spanning segment. At 314–329 (ARTYDAELSSAQTPAL) the chain is on the extracellular side. A helical transmembrane segment spans residues 330–350 (VILSLLPSLNSCTNPWIYLAF). Over 351–419 (SGKVWCRQQS…TTALMSSSPC (69 aa)) the chain is Cytoplasmic.

Belongs to the G-protein coupled receptor 1 family. Vasopressin/oxytocin receptor subfamily. Present in the nervous system and peripheral tissues.

The protein resides in the cell membrane. Functionally, acts as a receptor for octopressin. The protein is Octopressin receptor of Octopus vulgaris (Common octopus).